The primary structure comprises 195 residues: Pyridoxal 5'-phosphate synthase subunit PdxT (195 aa).

An L-glutamine-binding site is contributed by 46–48; that stretch reads GES. The active-site Nucleophile is cysteine 78. L-glutamine is bound by residues arginine 106 and 134-135; that span reads IR. Catalysis depends on charge relay system residues histidine 170 and glutamate 172.

Belongs to the glutaminase PdxT/SNO family. In terms of assembly, in the presence of PdxS, forms a dodecamer of heterodimers. Only shows activity in the heterodimer.

The enzyme catalyses aldehydo-D-ribose 5-phosphate + D-glyceraldehyde 3-phosphate + L-glutamine = pyridoxal 5'-phosphate + L-glutamate + phosphate + 3 H2O + H(+). The catalysed reaction is L-glutamine + H2O = L-glutamate + NH4(+). It functions in the pathway cofactor biosynthesis; pyridoxal 5'-phosphate biosynthesis. Its function is as follows. Catalyzes the hydrolysis of glutamine to glutamate and ammonia as part of the biosynthesis of pyridoxal 5'-phosphate. The resulting ammonia molecule is channeled to the active site of PdxS. This is Pyridoxal 5'-phosphate synthase subunit PdxT from Pseudothermotoga lettingae (strain ATCC BAA-301 / DSM 14385 / NBRC 107922 / TMO) (Thermotoga lettingae).